The chain runs to 81 residues: MLAGMPSLSHLEQQEAADRIHLLMEQGMSSGEAIARVAQEIREKHQGDQVSVMFDDEDDDEEYQERPDDQADDDSEEDENY.

A disordered region spans residues 43–81; it reads EKHQGDQVSVMFDDEDDDEEYQERPDDQADDDSEEDENY. Composition is skewed to acidic residues over residues 54–63 and 70–81; these read FDDEDDDEEY and QADDDSEEDENY.

Belongs to the UPF0181 family.

The polypeptide is UPF0181 protein Spro_2806 (Serratia proteamaculans (strain 568)).